The following is a 232-amino-acid chain: 2,3,4,5-tetrahydropyridine-2,6-dicarboxylate N-acetyltransferase (232 aa).

Belongs to the transferase hexapeptide repeat family. DapH subfamily.

It carries out the reaction (S)-2,3,4,5-tetrahydrodipicolinate + acetyl-CoA + H2O = L-2-acetamido-6-oxoheptanedioate + CoA. Its pathway is amino-acid biosynthesis; L-lysine biosynthesis via DAP pathway; LL-2,6-diaminopimelate from (S)-tetrahydrodipicolinate (acetylase route): step 1/3. Its function is as follows. Catalyzes the transfer of an acetyl group from acetyl-CoA to tetrahydrodipicolinate. This is 2,3,4,5-tetrahydropyridine-2,6-dicarboxylate N-acetyltransferase from Streptococcus pneumoniae (strain CGSP14).